Here is a 101-residue protein sequence, read N- to C-terminus: Enhancer of yellow 2 transcription factor (101 aa).

It belongs to the ENY2 family. As to quaternary structure, component of the nuclear pore complex (NPC)-associated AMEX complex (anchoring and mRNA export complex), composed of at least e(y)2 and xmas-2. Component of the SAGA transcription coactivator-HAT complexes, at least composed of Ada2b, e(y)2, Pcaf/Gcn5, Taf10 and Nipped-A/Trrap. Within the SAGA complex, e(y)2, Sgf11, and not/nonstop form an additional subcomplex of SAGA called the DUB module (deubiquitination module). Component of the THO complex, composed of at least e(y)2, HPR1, THO2, THOC5, THOC6 and THOC7. Interacts with e(y)1. Interacts with su(Hw) (via zinc fingers). Interacts with xmas-2; required for localization to the nuclear periphery. Interacts with the nuclear pore complex (NPC).

It localises to the nucleus. The protein localises to the nucleoplasm. Its subcellular location is the cytoplasm. Its function is as follows. Involved in mRNA export coupled transcription activation by association with both the AMEX and the SAGA complexes. The SAGA complex is a multiprotein complex that activates transcription by remodeling chromatin and mediating histone acetylation and deubiquitination. Within the SAGA complex, participates in a subcomplex that specifically deubiquitinates histone H2B. The SAGA complex is recruited to specific gene promoters by activators, where it is required for transcription. Required for nuclear receptor-mediated transactivation. Involved in transcription elongation by recruiting the THO complex onto nascent mRNA. The AMEX complex functions in docking export-competent ribonucleoprotein particles (mRNPs) to the nuclear entrance of the nuclear pore complex (nuclear basket). AMEX participates in mRNA export and accurate chromatin positioning in the nucleus by tethering genes to the nuclear periphery. The chain is Enhancer of yellow 2 transcription factor from Drosophila sechellia (Fruit fly).